The sequence spans 229 residues: Protein FMP52-2, mitochondrial (229 aa).

The N-terminal 45 residues, 1–45, are a transit peptide targeting the mitochondrion; sequence MAAGAFILGSTGLCGYQMLRFAEKSSLFDKISTVGRKLPDFKSEK.

The protein belongs to the FMP52 family.

The protein localises to the mitochondrion outer membrane. This is Protein FMP52-2, mitochondrial (FMP522) from Scheffersomyces stipitis (strain ATCC 58785 / CBS 6054 / NBRC 10063 / NRRL Y-11545) (Yeast).